The chain runs to 523 residues: Pituitary adenylate cyclase-activating polypeptide type I receptor (523 aa).

The first 19 residues, 1 to 19, serve as a signal peptide directing secretion; sequence MARVLQLSLTALLLPVAIA. The Extracellular portion of the chain corresponds to 20–151; that stretch reads MHSDCIFKKE…SGDQDYYYLS (132 aa). Intrachain disulfides connect C33–C62, C53–C117, and C76–C133. N47, N59, and N116 each carry an N-linked (GlcNAc...) asparagine glycan. The segment at 124–138 is important for ADCYAP1/PACAP ligand binding and specificity; the sequence is EPFPHYFDACGFDDY. An important for ligand binding and specificity region spans residues 124 to 138; that stretch reads EPFPHYFDACGFDDY. A helical transmembrane segment spans residues 152 to 176; the sequence is VKALYTVGYSTSLATLTTAMVILCR. The Cytoplasmic segment spans residues 177-186; sequence FRKLHCTRNF. A helical membrane pass occupies residues 187-207; sequence IHMNLFVSFMLRAISVFIKDW. Topologically, residues 208–222 are extracellular; it reads ILYAEQDSSHCFVST. A helical membrane pass occupies residues 223 to 248; sequence VECKAVMVFFHYCVVSNYFWLFIEGL. A disulfide bridge links C225 with C295. The Cytoplasmic portion of the chain corresponds to 249–266; that stretch reads YLFTLLVETFFPERRYFY. A helical transmembrane segment spans residues 267–289; it reads WYTIIGWGTPTVCVTVWAVLRLY. Residues 290–301 are Extracellular-facing; sequence FDDAGCWDMNDS. Residues 302–328 form a helical membrane-spanning segment; the sequence is TALWWVIKGPVVGSIMVNFVLFIGIII. Topologically, residues 329–346 are cytoplasmic; it reads ILVQKLQSPDMGGNESSI. Residues 347-429 traverse the membrane as a helical segment; the sequence is YLTNLRLRVP…HYTVFAFSPE (83 aa). Residues 430-434 are Extracellular-facing; sequence NVSKR. A helical membrane pass occupies residues 435 to 458; the sequence is ERLVFELGLGSFQGFVVAVLYCFL. Residues 459–523 are Cytoplasmic-facing; that stretch reads NGEVQAEIKR…SSLPADNLAT (65 aa). S489 and S502 each carry phosphoserine.

It belongs to the G-protein coupled receptor 2 family. As to quaternary structure, interacts with maxadilan, a vasodilator peptide from Lutzomyia longipalpis saliva; the interaction results in ADCYAP1R1 activation. As to expression, hypothalamus, anterior pituitary, adrenal medulla, testicular germ cells.

The protein resides in the cell membrane. Its function is as follows. G protein-coupled receptor activated by the neuropeptide pituitary adenylate cyclase-activating polypeptide (ADCYAP1/PACAP). Binds both PACAP27 and PACAP38 bioactive peptides. Ligand binding causes a conformation change that triggers signaling via guanine nucleotide-binding proteins (G proteins) and modulates the activity of downstream effectors. Activates cAMP-dependent pathway. May regulate the release of adrenocorticotropin, luteinizing hormone, growth hormone, prolactin, epinephrine, and catecholamine. May play a role in spermatogenesis and sperm motility. Causes smooth muscle relaxation and secretion in the gastrointestinal tract. The sequence is that of Pituitary adenylate cyclase-activating polypeptide type I receptor from Rattus norvegicus (Rat).